The sequence spans 466 residues: 3-isopropylmalate dehydratase large subunit 1 (466 aa).

The [4Fe-4S] cluster site is built by cysteine 347, cysteine 407, and cysteine 410.

Belongs to the aconitase/IPM isomerase family. LeuC type 1 subfamily. As to quaternary structure, heterodimer of LeuC and LeuD. Requires [4Fe-4S] cluster as cofactor.

It carries out the reaction (2R,3S)-3-isopropylmalate = (2S)-2-isopropylmalate. It functions in the pathway amino-acid biosynthesis; L-leucine biosynthesis; L-leucine from 3-methyl-2-oxobutanoate: step 2/4. Functionally, catalyzes the isomerization between 2-isopropylmalate and 3-isopropylmalate, via the formation of 2-isopropylmaleate. In Salmonella choleraesuis (strain SC-B67), this protein is 3-isopropylmalate dehydratase large subunit 1.